The following is a 347-amino-acid chain: tRNA N6-adenosine threonylcarbamoyltransferase (347 aa).

H117 and H121 together coordinate Fe cation. Substrate contacts are provided by residues 140–144 (LVSGG), D173, G186, and N280. Residue D308 participates in Fe cation binding.

Belongs to the KAE1 / TsaD family. Fe(2+) is required as a cofactor.

Its subcellular location is the cytoplasm. The enzyme catalyses L-threonylcarbamoyladenylate + adenosine(37) in tRNA = N(6)-L-threonylcarbamoyladenosine(37) in tRNA + AMP + H(+). Its function is as follows. Required for the formation of a threonylcarbamoyl group on adenosine at position 37 (t(6)A37) in tRNAs that read codons beginning with adenine. Is involved in the transfer of the threonylcarbamoyl moiety of threonylcarbamoyl-AMP (TC-AMP) to the N6 group of A37, together with TsaE and TsaB. TsaD likely plays a direct catalytic role in this reaction. This is tRNA N6-adenosine threonylcarbamoyltransferase from Psychrobacter sp. (strain PRwf-1).